The sequence spans 1167 residues: DNA-directed RNA polymerase subunit beta (1167 aa).

It belongs to the RNA polymerase beta chain family. As to quaternary structure, the RNAP catalytic core consists of 2 alpha, 1 beta, 1 beta' and 1 omega subunit. When a sigma factor is associated with the core the holoenzyme is formed, which can initiate transcription.

It catalyses the reaction RNA(n) + a ribonucleoside 5'-triphosphate = RNA(n+1) + diphosphate. DNA-dependent RNA polymerase catalyzes the transcription of DNA into RNA using the four ribonucleoside triphosphates as substrates. The sequence is that of DNA-directed RNA polymerase subunit beta from Treponema denticola (strain ATCC 35405 / DSM 14222 / CIP 103919 / JCM 8153 / KCTC 15104).